Reading from the N-terminus, the 248-residue chain is tRNA pseudouridine synthase A (248 aa).

Asp53 acts as the Nucleophile in catalysis. Tyr116 lines the substrate pocket.

This sequence belongs to the tRNA pseudouridine synthase TruA family. Homodimer.

It carries out the reaction uridine(38/39/40) in tRNA = pseudouridine(38/39/40) in tRNA. Its function is as follows. Formation of pseudouridine at positions 38, 39 and 40 in the anticodon stem and loop of transfer RNAs. This chain is tRNA pseudouridine synthase A, found in Helicobacter hepaticus (strain ATCC 51449 / 3B1).